Consider the following 137-residue polypeptide: Thioredoxin-like protein R548 (137 aa).

One can recognise a Thioredoxin domain in the interval 2-137; the sequence is SKDSVETNTI…LEKSIVESSQ (136 aa). Catalysis depends on nucleophile residues Cys-61 and Cys-64. A disulfide bridge connects residues Cys-61 and Cys-64.

This sequence belongs to the thioredoxin family.

Its function is as follows. Participates in various redox reactions through the reversible oxidation of its active center dithiol to a disulfide and catalyzes dithiol-disulfide exchange reactions. The polypeptide is Thioredoxin-like protein R548 (Acanthamoeba polyphaga mimivirus (APMV)).